A 257-amino-acid chain; its full sequence is Thiazole synthase (257 aa).

Lys96 acts as the Schiff-base intermediate with DXP in catalysis. Residues Gly157, 184-185, and 206-207 each bind 1-deoxy-D-xylulose 5-phosphate; these read AG and NT.

The protein belongs to the ThiG family. Homotetramer. Forms heterodimers with either ThiH or ThiS.

It localises to the cytoplasm. It carries out the reaction [ThiS sulfur-carrier protein]-C-terminal-Gly-aminoethanethioate + 2-iminoacetate + 1-deoxy-D-xylulose 5-phosphate = [ThiS sulfur-carrier protein]-C-terminal Gly-Gly + 2-[(2R,5Z)-2-carboxy-4-methylthiazol-5(2H)-ylidene]ethyl phosphate + 2 H2O + H(+). Its pathway is cofactor biosynthesis; thiamine diphosphate biosynthesis. Functionally, catalyzes the rearrangement of 1-deoxy-D-xylulose 5-phosphate (DXP) to produce the thiazole phosphate moiety of thiamine. Sulfur is provided by the thiocarboxylate moiety of the carrier protein ThiS. In vitro, sulfur can be provided by H(2)S. The protein is Thiazole synthase of Rhizobium etli (strain ATCC 51251 / DSM 11541 / JCM 21823 / NBRC 15573 / CFN 42).